The sequence spans 260 residues: RxLR effector protein BLR38 (260 aa).

The first 18 residues, 1–18 (MHCTVFFLLIACAKSSYG), serve as a signal peptide directing secretion. The RxLR motif lies at 46-49 (RLLR). Positions 136-148 (MPSSRKRPRALDE) match the Nuclear localuization signal (NLS) motif.

Belongs to the RxLR effector family.

It localises to the secreted. Its subcellular location is the host nucleus. Its function is as follows. Secreted effector that triggers a robust hypersensitive response (HR) in Lactuca serriola LS102. The response to BLN06 was visible as strong necrosis. Although effector recognition is frequently associated with single dominant R gene loci, the recognition of BLR38 requires 2 unlinked loci that display incomplete dominance. The chain is RxLR effector protein BLR38 from Bremia lactucae (Lettuce downy mildew).